The sequence spans 157 residues: Protein Smg homolog (157 aa).

The protein belongs to the Smg family.

The sequence is that of Protein Smg homolog from Colwellia psychrerythraea (strain 34H / ATCC BAA-681) (Vibrio psychroerythus).